Consider the following 437-residue polypeptide: Tol-Pal system protein TolB (437 aa).

The first 23 residues, Met1 to Gly23, serve as a signal peptide directing secretion.

Belongs to the TolB family. As to quaternary structure, the Tol-Pal system is composed of five core proteins: the inner membrane proteins TolA, TolQ and TolR, the periplasmic protein TolB and the outer membrane protein Pal. They form a network linking the inner and outer membranes and the peptidoglycan layer.

It localises to the periplasm. Functionally, part of the Tol-Pal system, which plays a role in outer membrane invagination during cell division and is important for maintaining outer membrane integrity. The sequence is that of Tol-Pal system protein TolB from Coxiella burnetii (strain RSA 493 / Nine Mile phase I).